The primary structure comprises 449 residues: Phosphoglucosamine mutase (449 aa).

Ser101 (phosphoserine intermediate) is an active-site residue. Mg(2+) is bound by residues Ser101, Asp242, Asp244, and Asp246. Ser101 carries the post-translational modification Phosphoserine.

The protein belongs to the phosphohexose mutase family. Requires Mg(2+) as cofactor. In terms of processing, activated by phosphorylation.

The catalysed reaction is alpha-D-glucosamine 1-phosphate = D-glucosamine 6-phosphate. Its function is as follows. Catalyzes the conversion of glucosamine-6-phosphate to glucosamine-1-phosphate. This is Phosphoglucosamine mutase from Hyphomonas neptunium (strain ATCC 15444).